Consider the following 115-residue polypeptide: Waprin-like protein (115 aa).

A signal peptide spans 1 to 21 (MNRSLLAFAIVLVLLVAGTSS). Residues 23–69 (LFNKSGNCPMRNTVTSCTPRCIGDGECSSNQKCCPNKCGTTSCANSS) enclose the WAP domain. Intrachain disulfides connect cysteine 30–cysteine 56, cysteine 39–cysteine 60, cysteine 43–cysteine 55, and cysteine 49–cysteine 65.

The protein belongs to the venom waprin family. Cys-rich waprin subfamily. Expressed by the venom gland.

The protein resides in the secreted. Its function is as follows. Antimicrobial peptides with activity against Gram-positive and Gram-negative bacteria as well as fungi. Recognizes carbohydrates in the microbial cell walls, and induces structural damage to them. Also inhibits microbial serine proteases, as well as mammalian elastases. Carbohydrates that are recognized are LPS, mannan, peptidoglycan, and N-acetl-D-glucosamine. The protein is Waprin-like protein of Tetramorium bicarinatum (Tramp ant).